Consider the following 414-residue polypeptide: Serine--tRNA ligase (414 aa).

230 to 232 contacts L-serine; sequence TAE. Residue 261-263 participates in ATP binding; the sequence is RKE. Residue Glu-284 participates in L-serine binding. 348 to 351 lines the ATP pocket; the sequence is EISS. Ser-382 is a binding site for L-serine.

This sequence belongs to the class-II aminoacyl-tRNA synthetase family. Type-1 seryl-tRNA synthetase subfamily. In terms of assembly, homodimer. The tRNA molecule binds across the dimer.

The protein resides in the cytoplasm. The catalysed reaction is tRNA(Ser) + L-serine + ATP = L-seryl-tRNA(Ser) + AMP + diphosphate + H(+). It catalyses the reaction tRNA(Sec) + L-serine + ATP = L-seryl-tRNA(Sec) + AMP + diphosphate + H(+). It functions in the pathway aminoacyl-tRNA biosynthesis; selenocysteinyl-tRNA(Sec) biosynthesis; L-seryl-tRNA(Sec) from L-serine and tRNA(Sec): step 1/1. In terms of biological role, catalyzes the attachment of serine to tRNA(Ser). Is also able to aminoacylate tRNA(Sec) with serine, to form the misacylated tRNA L-seryl-tRNA(Sec), which will be further converted into selenocysteinyl-tRNA(Sec). This Nitratiruptor sp. (strain SB155-2) protein is Serine--tRNA ligase.